The sequence spans 399 residues: MWETKINPNKVFELRCKNTTYFGIGSIKKIKDILEVLKNKGINNVILVTGKGSYKASGAWDVVKPALETLGFKYSLYDKVGPNPTVDMIDEAAKIGRETGAKAVIGIGGGSPIDTAKSVAVLLEYTDKNARELYEQKFIPEKAAPIIAINLTHGTGTEVDRFAVATIPEKNYKPAIAYDCLYPMYAIDDPSLMTKLDKKQTIAVTIDALNHVTEAATTLVASPYSVLMAKETVRLIVRYLPAAVNDPENLVARYYLLYASALAGISFDNGLLHLTHALEHPLSAVKPEIAHGLGLGAILPAVVKAIYPSVAEVLAEVYSPIVPGLKGLPAEAEYVAKKVEEWLFKVGCTQKLSDFGFTKEDIPTLVRLAKTTPSLDGLLSNAPVEATEAVIAKIYEESF.

It belongs to the iron-containing alcohol dehydrogenase family. In terms of assembly, homotetramer. Requires Zn(2+) as cofactor.

It catalyses the reaction a primary alcohol + NADP(+) = an aldehyde + NADPH + H(+). Functionally, alcohol dehydrogenase active against primary long-chain alcohols. Pentan-1-ol is the optimum substrate in vitro, but also shows efficient dehydrogenase activity on propanol, hexanol, and ethanol. The chain is Long-chain primary alcohol dehydrogenase AdhA (adhA) from Thermoanaerobacter ethanolicus (Clostridium thermohydrosulfuricum).